We begin with the raw amino-acid sequence, 504 residues long: O-phosphoseryl-tRNA(Sec) selenium transferase (504 aa).

Positions 1 to 44 (MNPESFAAGERRVSPAYVRQGCEARRAHEHLIRLLLEQGKCPED) are tetramerization. Ser-14 carries the phosphoserine modification. Arg-75 is a pyridoxal 5'-phosphate binding site. Positions 96–106 (GRSGDISAVQP) are phosphate loop (P-loop). Positions 97, 98, and 105 each coordinate substrate. Residue Arg-271 coordinates tRNA. Lys-284 carries the N6-(pyridoxal phosphate)lysine modification. Arg-313 provides a ligand contact to substrate. The tRNA site is built by Arg-398 and Lys-463.

This sequence belongs to the SepSecS family. As to quaternary structure, homotetramer formed by a catalytic dimer and a non-catalytic dimer serving as a binding platform that orients tRNASec for catalysis. Each tetramer binds the CCA ends of two tRNAs which point to the active sites of the catalytic dimer. Requires pyridoxal 5'-phosphate as cofactor.

The protein resides in the cytoplasm. The catalysed reaction is O-phospho-L-seryl-tRNA(Sec) + selenophosphate + H2O = L-selenocysteinyl-tRNA(Sec) + 2 phosphate. Its pathway is aminoacyl-tRNA biosynthesis; selenocysteinyl-tRNA(Sec) biosynthesis; selenocysteinyl-tRNA(Sec) from L-seryl-tRNA(Sec) (archaeal/eukaryal route): step 2/2. Its function is as follows. Converts O-phosphoseryl-tRNA(Sec) to selenocysteinyl-tRNA(Sec) required for selenoprotein biosynthesis. This is O-phosphoseryl-tRNA(Sec) selenium transferase (Sepsecs) from Mus musculus (Mouse).